The primary structure comprises 301 residues: Acetylglutamate kinase (301 aa).

Substrate contacts are provided by residues G64–G65, R86, and N181.

Belongs to the acetylglutamate kinase family. ArgB subfamily.

It is found in the cytoplasm. The enzyme catalyses N-acetyl-L-glutamate + ATP = N-acetyl-L-glutamyl 5-phosphate + ADP. Its pathway is amino-acid biosynthesis; L-arginine biosynthesis; N(2)-acetyl-L-ornithine from L-glutamate: step 2/4. In terms of biological role, catalyzes the ATP-dependent phosphorylation of N-acetyl-L-glutamate. The sequence is that of Acetylglutamate kinase from Aliarcobacter butzleri (strain RM4018) (Arcobacter butzleri).